The sequence spans 146 residues: Deoxyuridine 5'-triphosphate nucleotidohydrolase (146 aa).

Substrate contacts are provided by residues 66–68 (RSG), asparagine 79, and 83–85 (TID).

Belongs to the dUTPase family. It depends on Mg(2+) as a cofactor.

It carries out the reaction dUTP + H2O = dUMP + diphosphate + H(+). Its pathway is pyrimidine metabolism; dUMP biosynthesis; dUMP from dCTP (dUTP route): step 2/2. This enzyme is involved in nucleotide metabolism: it produces dUMP, the immediate precursor of thymidine nucleotides and it decreases the intracellular concentration of dUTP so that uracil cannot be incorporated into DNA. The protein is Deoxyuridine 5'-triphosphate nucleotidohydrolase of Citrifermentans bemidjiense (strain ATCC BAA-1014 / DSM 16622 / JCM 12645 / Bem) (Geobacter bemidjiensis).